Consider the following 145-residue polypeptide: MTDTRHMYGGPGFGHYQGFGIGHPGYGMQSTGYPGYGMYGGHPGYGMQGYPDHGIHGGVGGYPGYGGYGGYPSGGYGGSPGTGSYPSMHHENDGHHHYYHHHHDGKDNLHHHHHHVGKDNHHHHHDGHYGHHHHHMGHWGKDGYK.

PG repeat units lie at residues 9–15 (GGPGFGH), 22–28 (GHPGYGM), 32–38 (GYPGYGM), and 41–47 (GHPGYGM). 3 GGY repeats span residues 57-63 (GGVGGYP), 66-72 (GGYGGYP), and 74-80 (GGYGGSP). H4 repeat units lie at residues 99 to 105 (YHHHHDG), 111 to 117 (HHHHHVG), 121 to 127 (HHHHHDG), and 131 to 137 (HHHHHMG). Residues 100-138 (HHHHDGKDNLHHHHHHVGKDNHHHHHDGHYGHHHHHMGH) are compositionally biased toward basic residues. A disordered region spans residues 100–145 (HHHHDGKDNLHHHHHHVGKDNHHHHHDGHYGHHHHHMGHWGKDGYK).

The protein resides in the spore coat. In terms of biological role, part of the spore coat. The protein is Spore coat protein YeeK (yeeK) of Bacillus subtilis (strain 168).